We begin with the raw amino-acid sequence, 360 residues long: Phospho-N-acetylmuramoyl-pentapeptide-transferase (360 aa).

10 consecutive transmembrane segments (helical) span residues 26–46, 74–94, 97–117, 132–152, 168–188, 199–219, 236–256, 263–283, 288–308, and 338–358; these read AILG…KLIE, MGGL…GDLG, YVWV…IDDY, WKYI…YTTA, VMPQ…VGSS, GLAI…AYLS, SGEL…FLWF, VFMG…IAVL, ILLV…ILQV, and VIVR…ATLK.

This sequence belongs to the glycosyltransferase 4 family. MraY subfamily. Requires Mg(2+) as cofactor.

The protein resides in the cell inner membrane. It carries out the reaction UDP-N-acetyl-alpha-D-muramoyl-L-alanyl-gamma-D-glutamyl-meso-2,6-diaminopimeloyl-D-alanyl-D-alanine + di-trans,octa-cis-undecaprenyl phosphate = di-trans,octa-cis-undecaprenyl diphospho-N-acetyl-alpha-D-muramoyl-L-alanyl-D-glutamyl-meso-2,6-diaminopimeloyl-D-alanyl-D-alanine + UMP. The protein operates within cell wall biogenesis; peptidoglycan biosynthesis. Functionally, catalyzes the initial step of the lipid cycle reactions in the biosynthesis of the cell wall peptidoglycan: transfers peptidoglycan precursor phospho-MurNAc-pentapeptide from UDP-MurNAc-pentapeptide onto the lipid carrier undecaprenyl phosphate, yielding undecaprenyl-pyrophosphoryl-MurNAc-pentapeptide, known as lipid I. In Shewanella sp. (strain ANA-3), this protein is Phospho-N-acetylmuramoyl-pentapeptide-transferase.